A 4471-amino-acid polypeptide reads, in one-letter code: Dynein axonemal heavy chain 10 (4471 aa).

Residues 1–1793 (MVPEEVEVEI…NIRQCTGTFG (1793 aa)) form a stem region. Residues 46-65 (TESLGQPLNREDEEMDKEIS) are disordered. 4 coiled-coil regions span residues 203–223 (NVQK…GEIK), 602–622 (QEVK…EDRK), 1071–1106 (KLLN…EDLK), and 1217–1245 (VELL…KLFD). Asn-1074 carries an N-linked (GlcNAc...) asparagine glycan. The stretch at 1221–1254 (GVYERELARHEKSRQELANAEKLFDLPITMYPEL) is one TPR 1 repeat. 4 AAA regions span residues 1794–2015 (YGYE…VLVM), 2075–2294 (DAVE…VIVE), 2417–2665 (IHAP…VFNG), and 2765–3014 (EYNE…LRRS). The GPAGTGKT motif motif lies at 1832-1839 (GPAGTGKT). An ATP-binding site is contributed by 1832–1839 (GPAGTGKT). The CFDEFNR motif motif lies at 1882–1888 (CFDEFNR). ATP contacts are provided by residues 2113–2120 (GPTRGGKS) and 2455–2462 (GESGTSKT). TPR repeat units follow at residues 2736–2769 (MALH…YNES) and 2771–2797 (TKMN…MDRG). Residues 2747–2770 (EDIQDYEAAKALFQEILEEYNESN) adopt a coiled-coil conformation. 2803–2810 (GVGGSGKQ) contacts ATP. Residues 3029 to 3313 (YSKLLDEKTQ…QKLQEEAEIM (285 aa)) form a stalk region. 3 coiled-coil regions span residues 3045 to 3131 (KRLD…LAEV), 3257 to 3327 (KREK…ISGL), and 3567 to 3638 (ERRE…EKTA). Positions 3399–3629 (LTDDVEISRW…TKSKATEVSE (231 aa)) are AAA 5. The TPR 4 repeat unit spans residues 3802–3837 (WQEWYDLDSLEQFPVPLGYDNNITPFQKLLILRCFR). Residues 3845 to 4062 (VTDYVTVTMG…FQVCMEILNT (218 aa)) are AAA 6. The TPR 5 repeat unit spans residues 4074–4108 (RIPWGSLKYLIGEVMYGGRAIDSFDRRILTIYMDE). The stretch at 4235–4260 (LLQELERFNKLVVRMTKSLAELQRAL) forms a coiled coil.

This sequence belongs to the dynein heavy chain family. As to quaternary structure, consists of at least two heavy chains and a number of intermediate and light chains. Expressed primarily in trachea and testis, 2 tissues containing axonemal structures. Also expressed in brain but not in adult heart.

The protein localises to the cytoplasm. The protein resides in the cytoskeleton. Its subcellular location is the cilium axoneme. Its function is as follows. Force generating protein of respiratory cilia. Produces force towards the minus ends of microtubules. Dynein has ATPase activity; the force-producing power stroke is thought to occur on release of ADP. Involved in sperm motility; implicated in sperm flagellar assembly. Probable inner arm dynein heavy chain. The polypeptide is Dynein axonemal heavy chain 10 (DNAH10) (Homo sapiens (Human)).